The chain runs to 372 residues: NAD(P)H-quinone oxidoreductase subunit 1 (372 aa).

The next 9 helical transmembrane spans lie at 27-47, 65-85, 97-117, 128-148, 166-186, 204-224, 266-286, 308-328, and 347-367; these read AIWM…GVLV, PEYI…KLVF, WLFT…YLIV, IGTG…GLLM, AAQS…IVMM, ILGW…IAAL, VLSA…PIPI, ALGI…AILL, and FLLP…LAFP.

The protein belongs to the complex I subunit 1 family. NDH-1 is composed of at least 11 different subunits.

The protein resides in the cellular thylakoid membrane. It carries out the reaction a plastoquinone + NADH + (n+1) H(+)(in) = a plastoquinol + NAD(+) + n H(+)(out). The catalysed reaction is a plastoquinone + NADPH + (n+1) H(+)(in) = a plastoquinol + NADP(+) + n H(+)(out). In terms of biological role, NDH-1 shuttles electrons from an unknown electron donor, via FMN and iron-sulfur (Fe-S) centers, to quinones in the respiratory and/or the photosynthetic chain. The immediate electron acceptor for the enzyme in this species is believed to be plastoquinone. Couples the redox reaction to proton translocation, and thus conserves the redox energy in a proton gradient. The polypeptide is NAD(P)H-quinone oxidoreductase subunit 1 (Trichormus variabilis (strain ATCC 29413 / PCC 7937) (Anabaena variabilis)).